Consider the following 242-residue polypeptide: Type III pantothenate kinase (242 aa).

ATP is bound at residue 5 to 12 (DLGNTRLK). Substrate is bound by residues Tyr94 and 100–103 (GCDR). Asp102 serves as the catalytic Proton acceptor. Residue Thr124 coordinates ATP. Thr175 lines the substrate pocket.

Belongs to the type III pantothenate kinase family. As to quaternary structure, homodimer. Requires NH4(+) as cofactor. K(+) is required as a cofactor.

It is found in the cytoplasm. The enzyme catalyses (R)-pantothenate + ATP = (R)-4'-phosphopantothenate + ADP + H(+). Its pathway is cofactor biosynthesis; coenzyme A biosynthesis; CoA from (R)-pantothenate: step 1/5. In terms of biological role, catalyzes the phosphorylation of pantothenate (Pan), the first step in CoA biosynthesis. The chain is Type III pantothenate kinase from Psychrobacter arcticus (strain DSM 17307 / VKM B-2377 / 273-4).